Consider the following 92-residue polypeptide: Non-specific lipid-transfer protein B (92 aa).

Intrachain disulfides connect Cys-3–Cys-51, Cys-13–Cys-28, Cys-29–Cys-74, and Cys-49–Cys-88.

The protein belongs to the plant LTP family.

Its function is as follows. Plant non-specific lipid-transfer proteins transfer phospholipids as well as galactolipids across membranes. May play a role in wax or cutin deposition in the cell walls of expanding epidermal cells and certain secretory tissues. In Ricinus communis (Castor bean), this protein is Non-specific lipid-transfer protein B.